The primary structure comprises 768 residues: Probable beta-glucosidase M (768 aa).

Positions 1 to 19 (MHAIAGLTGFLAGVSLSYA) are cleaved as a signal peptide. N-linked (GlcNAc...) asparagine glycans are attached at residues asparagine 25, asparagine 72, and asparagine 259. Aspartate 287 is an active-site residue. N-linked (GlcNAc...) asparagine glycans are attached at residues asparagine 315, asparagine 322, asparagine 394, asparagine 434, asparagine 472, asparagine 543, and asparagine 651.

It belongs to the glycosyl hydrolase 3 family.

It localises to the secreted. It carries out the reaction Hydrolysis of terminal, non-reducing beta-D-glucosyl residues with release of beta-D-glucose.. Its pathway is glycan metabolism; cellulose degradation. Beta-glucosidases are one of a number of cellulolytic enzymes involved in the degradation of cellulosic biomass. Catalyzes the last step releasing glucose from the inhibitory cellobiose. The polypeptide is Probable beta-glucosidase M (bglM) (Aspergillus flavus (strain ATCC 200026 / FGSC A1120 / IAM 13836 / NRRL 3357 / JCM 12722 / SRRC 167)).